A 377-amino-acid chain; its full sequence is Gap junction gamma-1 protein (377 aa).

Over 1–18 (MSWSFLTRLLEEINNHST) the chain is Cytoplasmic. The helical transmembrane segment at 19–39 (FVGKVWLTVLIIFRIVLTAVG) threads the bilayer. The Extracellular segment spans residues 40–75 (GESIYYDEQSKFTCNTQQPGCENVCYDAFAPLSHVR). The chain crosses the membrane as a helical span at residues 76–96 (FWVFQIILITTPSIMYLGFAM). Topologically, residues 97–174 (HRIARQPEMQ…RRIKQDGLMK (78 aa)) are cytoplasmic. The segment at 129–163 (DYEEAEDNQEEDPMICEEEEPEKDSEKGDKKKHDG) is disordered. A compositionally biased stretch (acidic residues) spans 131–151 (EEAEDNQEEDPMICEEEEPEK). A helical membrane pass occupies residues 175-197 (VYVLQLLFRSVFEVGFLMGQYIL). Topologically, residues 198 to 228 (YGFEVIPFFVCSRKPCPHTVDCFVSRPTEKT) are extracellular. Residues 229–249 (IFLLIMYAVSALCLFLNLCEL) traverse the membrane as a helical segment. The Cytoplasmic segment spans residues 250–377 (FHLGIGGIRD…GVGNREKSGL (128 aa)). 2 disordered regions span residues 265-294 (KKELQESRKKTPSAPPNYHSVLKKGRLPNG) and 334-377 (LNPT…KSGL). Polar residues predominate over residues 337 to 362 (TGDNTHASRSSSPESNSIAAEQNRLN).

It belongs to the connexin family. Gamma-type subfamily. In terms of assembly, a connexon is composed of a hexamer of connexins.

The protein localises to the cell membrane. It localises to the cell junction. The protein resides in the gap junction. Its function is as follows. One gap junction consists of a cluster of closely packed pairs of transmembrane channels, the connexons, through which materials of low MW diffuse from one cell to a neighboring cell. This is Gap junction gamma-1 protein (gjc1) from Xenopus tropicalis (Western clawed frog).